A 272-amino-acid chain; its full sequence is Undecaprenyl-diphosphatase (272 aa).

A run of 8 helical transmembrane segments spans residues 4-24 (IHSL…EFLP), 45-65 (AETF…VMFW), 89-109 (LTLG…LVFH), 115-135 (LFNP…LIAA), 152-174 (TYRQ…FSRS), 189-209 (YAAS…ATAL), 225-245 (MFAV…KTFL), and 251-271 (ISFI…YVVF).

This sequence belongs to the UppP family.

It localises to the cell inner membrane. The catalysed reaction is di-trans,octa-cis-undecaprenyl diphosphate + H2O = di-trans,octa-cis-undecaprenyl phosphate + phosphate + H(+). Functionally, catalyzes the dephosphorylation of undecaprenyl diphosphate (UPP). Confers resistance to bacitracin. This is Undecaprenyl-diphosphatase from Citrobacter koseri (strain ATCC BAA-895 / CDC 4225-83 / SGSC4696).